Reading from the N-terminus, the 276-residue chain is 2-dehydro-3-deoxyphosphooctonate aldolase (276 aa).

This sequence belongs to the KdsA family.

Its subcellular location is the cytoplasm. The catalysed reaction is D-arabinose 5-phosphate + phosphoenolpyruvate + H2O = 3-deoxy-alpha-D-manno-2-octulosonate-8-phosphate + phosphate. Its pathway is carbohydrate biosynthesis; 3-deoxy-D-manno-octulosonate biosynthesis; 3-deoxy-D-manno-octulosonate from D-ribulose 5-phosphate: step 2/3. The sequence is that of 2-dehydro-3-deoxyphosphooctonate aldolase from Stenotrophomonas maltophilia (strain K279a).